A 328-amino-acid polypeptide reads, in one-letter code: uncharacterized protein (328 aa).

Positions 72–91 form a DNA-binding region, H-T-H motif; sequence ALQIRDKFNLQRVIIVPDGE.

It belongs to the SorC transcriptional regulatory family.

This is an uncharacterized protein from Escherichia coli (strain K12).